Here is a 448-residue protein sequence, read N- to C-terminus: MNDLSREDLLQKIRLLELENAKLKESKSAVSTVSDQYEYDAKYPKIDEYFSSDEYKRYGRQMIVPQFGSLISQVKLKKSKVLFIGAGGLGCPALLYLSASGVGEIGIIDDDLVDISNLHRQVLHTTESVGIHKCESAKRYINKLNPHVKVNTYPFRLSNDNAFDIIEKYDLILDCTDTPATRYLINDVSVICGKTIVSGSGLKTDGQLSILNFHGIGPCYRCFYPKPPSPGSVTSCSDGGVVGPAIGLIGITMALEAIKVITDFYTDETFKPFLSMYSGYPQQQIRVFKMRNKQANCAVCGNNPTVLKSTISDNDIDYAEFCGRVNPNVLAPELRISVQEYHNYINSSQGENSILIDVRPKEQYEITKLPNSINIAWDPTFIKADNIDSYLPSNFDKNTNTFVMCRYGNDSQMATKKLIENFGFNEVKDIKGGINKWSKEIDSKIPQY.

ATP-binding positions include glycine 88, aspartate 109, 116-120, lysine 133, and 177-178; these read SNLHR and DT. Positions 219 and 222 each coordinate Zn(2+). Cysteine 236 (glycyl thioester intermediate; for adenylyltransferase activity) is an active-site residue. 2 residues coordinate Zn(2+): cysteine 297 and cysteine 300. One can recognise a Rhodanese domain in the interval 349 to 446; that stretch reads QGENSILIDV…WSKEIDSKIP (98 aa). Catalysis depends on cysteine 405, which acts as the Cysteine persulfide intermediate; for sulfurtransferase activity.

The protein in the N-terminal section; belongs to the HesA/MoeB/ThiF family. UBA4 subfamily. It depends on Zn(2+) as a cofactor.

The protein localises to the cytoplasm. It is found in the cytosol. The protein operates within tRNA modification; 5-methoxycarbonylmethyl-2-thiouridine-tRNA biosynthesis. Plays a central role in 2-thiolation of mcm(5)S(2)U at tRNA wobble positions of cytosolic tRNA(Lys), tRNA(Glu) and tRNA(Gln). Acts by mediating the C-terminal thiocarboxylation of sulfur carrier URM1. Its N-terminus first activates URM1 as acyl-adenylate (-COAMP), then the persulfide sulfur on the catalytic cysteine is transferred to URM1 to form thiocarboxylation (-COSH) of its C-terminus. The reaction probably involves hydrogen sulfide that is generated from the persulfide intermediate and that acts as a nucleophile towards URM1. Subsequently, a transient disulfide bond is formed. Does not use thiosulfate as sulfur donor; NFS1 probably acting as a sulfur donor for thiocarboxylation reactions. Prior mcm(5) tRNA modification by the elongator complex is required for 2-thiolation. May also be involved in protein urmylation. The sequence is that of Adenylyltransferase and sulfurtransferase UBA4 from Debaryomyces hansenii (strain ATCC 36239 / CBS 767 / BCRC 21394 / JCM 1990 / NBRC 0083 / IGC 2968) (Yeast).